A 260-amino-acid chain; its full sequence is Flap endonuclease Xni (260 aa).

Asp104 contributes to the Mg(2+) binding site. Positions 160-249 (VSPQQLTDYW…LNGNLQQLRL (90 aa)) constitute a 5'-3' exonuclease domain. Residues Leu171, Ala172, Pro180, Val182, and Ile185 each coordinate K(+). An interaction with DNA region spans residues 184–189 (GIGPKS).

The protein belongs to the Xni family. Mg(2+) serves as cofactor. The cofactor is K(+).

Functionally, has flap endonuclease activity. During DNA replication, flap endonucleases cleave the 5'-overhanging flap structure that is generated by displacement synthesis when DNA polymerase encounters the 5'-end of a downstream Okazaki fragment. The chain is Flap endonuclease Xni from Pectobacterium carotovorum subsp. carotovorum (strain PC1).